Consider the following 116-residue polypeptide: ATP-dependent Clp protease adapter protein ClpS (116 aa).

Over residues 1 to 11 (MRRINTIMQGK) the composition is skewed to polar residues. Positions 1–23 (MRRINTIMQGKTNGGNGPESGTV) are disordered.

This sequence belongs to the ClpS family. Binds to the N-terminal domain of the chaperone ClpA.

In terms of biological role, involved in the modulation of the specificity of the ClpAP-mediated ATP-dependent protein degradation. The chain is ATP-dependent Clp protease adapter protein ClpS from Brucella abortus (strain S19).